Consider the following 363-residue polypeptide: 3-isopropylmalate dehydrogenase (363 aa).

78–91 lines the NAD(+) pocket; that stretch reads GKRWDHLPINERPE. Positions 99, 109, 138, and 227 each coordinate substrate. Asp-227, Asp-251, and Asp-255 together coordinate Mg(2+). Residue 285-297 coordinates NAD(+); it reads GSAPDIAGKNTAN.

This sequence belongs to the isocitrate and isopropylmalate dehydrogenases family. LeuB type 1 subfamily. As to quaternary structure, homodimer. Requires Mg(2+) as cofactor. It depends on Mn(2+) as a cofactor.

Its subcellular location is the cytoplasm. The enzyme catalyses (2R,3S)-3-isopropylmalate + NAD(+) = 4-methyl-2-oxopentanoate + CO2 + NADH. The protein operates within amino-acid biosynthesis; L-leucine biosynthesis; L-leucine from 3-methyl-2-oxobutanoate: step 3/4. Functionally, catalyzes the oxidation of 3-carboxy-2-hydroxy-4-methylpentanoate (3-isopropylmalate) to 3-carboxy-4-methyl-2-oxopentanoate. The product decarboxylates to 4-methyl-2 oxopentanoate. This is 3-isopropylmalate dehydrogenase from Buchnera aphidicola subsp. Uroleucon helianthicola.